A 111-amino-acid chain; its full sequence is Iron-sulfur cluster insertion protein ErpA (111 aa).

3 residues coordinate iron-sulfur cluster: C39, C103, and C105.

Belongs to the HesB/IscA family. Homodimer. Iron-sulfur cluster is required as a cofactor.

Its function is as follows. Required for insertion of 4Fe-4S clusters for at least IspG. The chain is Iron-sulfur cluster insertion protein ErpA from Buchnera aphidicola subsp. Cinara cedri (strain Cc).